We begin with the raw amino-acid sequence, 318 residues long: Receptor homology region, transmembrane domain- and RING domain-containing protein 5 (318 aa).

A signal peptide spans 1–20 (MNYSWITIMSLLVICKLASA). Over 22–163 (VVLIGKNTIL…IPGFGISSWS (142 aa)) the chain is Lumenal. Residues C62 and C87 are joined by a disulfide bond. The PA domain maps to 70 to 143 (EKRSKYRSSY…RASGEVLKGY (74 aa)). N121 carries an N-linked (GlcNAc...) asparagine glycan. A helical membrane pass occupies residues 164-184 (IMGITFISLLAMSAILATCFV). Over 185–318 (VRRHQIRQSV…DLPIVVRVYL (134 aa)) the chain is Cytoplasmic. An RING-type; atypical zinc finger spans residues 233–275 (CAICIDDYCVGEKLRILPCKHKYHAVCIDSWLGRCRSFCPVCK).

The protein localises to the prevacuolar compartment membrane. Its subcellular location is the protein storage vacuole membrane. In terms of biological role, involved in the trafficking of vacuolar proteins. May function as a sorting receptor for protein trafficking to the protein storage vacuole (PSV). The polypeptide is Receptor homology region, transmembrane domain- and RING domain-containing protein 5 (RMR5) (Arabidopsis thaliana (Mouse-ear cress)).